A 268-amino-acid chain; its full sequence is 4-hydroxy-tetrahydrodipicolinate reductase (268 aa).

NAD(+)-binding positions include Gly7–Met12 and Glu33. Arg34 contacts NADP(+). Residues Gly97–Thr99 and Ser121–Met124 contribute to the NAD(+) site. Residue His155 is the Proton donor/acceptor of the active site. (S)-2,3,4,5-tetrahydrodipicolinate is bound at residue His156. Lys159 serves as the catalytic Proton donor. Gly165–Thr166 provides a ligand contact to (S)-2,3,4,5-tetrahydrodipicolinate.

This sequence belongs to the DapB family.

Its subcellular location is the cytoplasm. It carries out the reaction (S)-2,3,4,5-tetrahydrodipicolinate + NAD(+) + H2O = (2S,4S)-4-hydroxy-2,3,4,5-tetrahydrodipicolinate + NADH + H(+). The catalysed reaction is (S)-2,3,4,5-tetrahydrodipicolinate + NADP(+) + H2O = (2S,4S)-4-hydroxy-2,3,4,5-tetrahydrodipicolinate + NADPH + H(+). The protein operates within amino-acid biosynthesis; L-lysine biosynthesis via DAP pathway; (S)-tetrahydrodipicolinate from L-aspartate: step 4/4. Its function is as follows. Catalyzes the conversion of 4-hydroxy-tetrahydrodipicolinate (HTPA) to tetrahydrodipicolinate. This is 4-hydroxy-tetrahydrodipicolinate reductase from Brucella melitensis biotype 1 (strain ATCC 23456 / CCUG 17765 / NCTC 10094 / 16M).